We begin with the raw amino-acid sequence, 403 residues long: Flavohemoprotein (403 aa).

The Globin domain occupies 1-138; it reads MLTQKTKDIV…LADILAGMES (138 aa). Histidine 85 contributes to the heme b binding site. Catalysis depends on charge relay system residues tyrosine 95 and glutamate 137. The tract at residues 149–403 is reductase; that stretch reads GGWAGWRRFI…EVFGPDLFAE (255 aa). The FAD-binding FR-type domain occupies 152–262; the sequence is AGWRRFIVRE…AAPYGNFYID (111 aa). FAD contacts are provided by residues tyrosine 190 and 206–209; that span reads RQYS. Residue 275-280 coordinates NADP(+); it reads GVGLTP. 395 to 398 contributes to the FAD binding site; that stretch reads VFGP.

Belongs to the globin family. Two-domain flavohemoproteins subfamily. It in the C-terminal section; belongs to the flavoprotein pyridine nucleotide cytochrome reductase family. Heme b serves as cofactor. FAD is required as a cofactor.

It carries out the reaction 2 nitric oxide + NADPH + 2 O2 = 2 nitrate + NADP(+) + H(+). The enzyme catalyses 2 nitric oxide + NADH + 2 O2 = 2 nitrate + NAD(+) + H(+). Its function is as follows. Is involved in NO detoxification in an aerobic process, termed nitric oxide dioxygenase (NOD) reaction that utilizes O(2) and NAD(P)H to convert NO to nitrate, which protects the bacterium from various noxious nitrogen compounds. Therefore, plays a central role in the inducible response to nitrosative stress. This is Flavohemoprotein from Rhizobium meliloti (strain 1021) (Ensifer meliloti).